A 214-amino-acid polypeptide reads, in one-letter code: Orotate phosphoribosyltransferase (214 aa).

K26 contributes to the 5-phospho-alpha-D-ribose 1-diphosphate binding site. 34–35 (FF) serves as a coordination point for orotate. 5-phospho-alpha-D-ribose 1-diphosphate contacts are provided by residues 72-73 (YK), R99, K100, K103, H105, and 124-132 (DDVITAGTA). Orotate is bound by residues T128 and R156.

This sequence belongs to the purine/pyrimidine phosphoribosyltransferase family. PyrE subfamily. In terms of assembly, homodimer. It depends on Mg(2+) as a cofactor.

It catalyses the reaction orotidine 5'-phosphate + diphosphate = orotate + 5-phospho-alpha-D-ribose 1-diphosphate. It functions in the pathway pyrimidine metabolism; UMP biosynthesis via de novo pathway; UMP from orotate: step 1/2. Functionally, catalyzes the transfer of a ribosyl phosphate group from 5-phosphoribose 1-diphosphate to orotate, leading to the formation of orotidine monophosphate (OMP). The polypeptide is Orotate phosphoribosyltransferase (Pasteurella multocida (strain Pm70)).